A 337-amino-acid chain; its full sequence is MEDRMVSASYKNEDFDVEHSLRPEKLSEYIGQDKVKEKLSIFTKAAKMRNEALDHVLLYGPPGLGKTTLANIIAREMGGTLKVTSGPAIERPGDMAAILTSLNDYDVLFIDEIHRLNRTVEEIMYPAMEDNVLDIVIGKGAAAKSIRLDLPKFTLIGATTRVGLLTSPLRDRFGVLSAMEFYNEDELKEIILRSSKILGVVTTEEAAFEIARRSRGTPRIANRLLKRVRDYCDVKGDGVIDINIAKNALSLLEIDGEGFDKIDNKILEAIIDNFKGGPVGLETLAYFIGEELDTIQDVYEPYLLQKGFIVRMPRGRKATEKAYRHLKREFKEQTKLT.

Residues methionine 1–tyrosine 182 form a large ATPase domain (RuvB-L) region. 9 residues coordinate ATP: leucine 21, arginine 22, glycine 63, lysine 66, threonine 67, threonine 68, arginine 172, tyrosine 182, and arginine 219. Threonine 67 is a binding site for Mg(2+). The tract at residues asparagine 183–glutamate 253 is small ATPAse domain (RuvB-S). The segment at glycine 256–threonine 337 is head domain (RuvB-H). Residues arginine 311 and arginine 316 each contribute to the DNA site.

This sequence belongs to the RuvB family. In terms of assembly, homohexamer. Forms an RuvA(8)-RuvB(12)-Holliday junction (HJ) complex. HJ DNA is sandwiched between 2 RuvA tetramers; dsDNA enters through RuvA and exits via RuvB. An RuvB hexamer assembles on each DNA strand where it exits the tetramer. Each RuvB hexamer is contacted by two RuvA subunits (via domain III) on 2 adjacent RuvB subunits; this complex drives branch migration. In the full resolvosome a probable DNA-RuvA(4)-RuvB(12)-RuvC(2) complex forms which resolves the HJ.

The protein localises to the cytoplasm. The enzyme catalyses ATP + H2O = ADP + phosphate + H(+). In terms of biological role, the RuvA-RuvB-RuvC complex processes Holliday junction (HJ) DNA during genetic recombination and DNA repair, while the RuvA-RuvB complex plays an important role in the rescue of blocked DNA replication forks via replication fork reversal (RFR). RuvA specifically binds to HJ cruciform DNA, conferring on it an open structure. The RuvB hexamer acts as an ATP-dependent pump, pulling dsDNA into and through the RuvAB complex. RuvB forms 2 homohexamers on either side of HJ DNA bound by 1 or 2 RuvA tetramers; 4 subunits per hexamer contact DNA at a time. Coordinated motions by a converter formed by DNA-disengaged RuvB subunits stimulates ATP hydrolysis and nucleotide exchange. Immobilization of the converter enables RuvB to convert the ATP-contained energy into a lever motion, pulling 2 nucleotides of DNA out of the RuvA tetramer per ATP hydrolyzed, thus driving DNA branch migration. The RuvB motors rotate together with the DNA substrate, which together with the progressing nucleotide cycle form the mechanistic basis for DNA recombination by continuous HJ branch migration. Branch migration allows RuvC to scan DNA until it finds its consensus sequence, where it cleaves and resolves cruciform DNA. In Clostridium novyi (strain NT), this protein is Holliday junction branch migration complex subunit RuvB.